Consider the following 150-residue polypeptide: Dual specificity protein phosphatase 23 (150 aa).

Positions 7-150 (NFSWVLPGRL…AVFQFYQRTK (144 aa)) constitute a Tyrosine-protein phosphatase domain. Cys95 functions as the Phosphocysteine intermediate in the catalytic mechanism.

Belongs to the protein-tyrosine phosphatase family. Non-receptor class dual specificity subfamily. Widely expressed.

It is found in the cytoplasm. The protein localises to the cytosol. It localises to the nucleus. The enzyme catalyses O-phospho-L-tyrosyl-[protein] + H2O = L-tyrosyl-[protein] + phosphate. It carries out the reaction O-phospho-L-seryl-[protein] + H2O = L-seryl-[protein] + phosphate. The catalysed reaction is O-phospho-L-threonyl-[protein] + H2O = L-threonyl-[protein] + phosphate. Its function is as follows. Protein phosphatase that mediates dephosphorylation of proteins phosphorylated on Tyr and Ser/Thr residues. In vitro, it can dephosphorylate p44-ERK1 (MAPK3) but not p54 SAPK-beta (MAPK10) in vitro. Able to enhance activation of JNK and p38 (MAPK14). The polypeptide is Dual specificity protein phosphatase 23 (Dusp23) (Mus musculus (Mouse)).